The sequence spans 172 residues: Trypsin inhibitor 1A (172 aa).

Disulfide bonds link cysteine 40–cysteine 84 and cysteine 133–cysteine 139.

The protein belongs to the protease inhibitor I3 (leguminous Kunitz-type inhibitor) family.

Functionally, WTI-1B inhibits trypsin stoichiometrically. This Psophocarpus tetragonolobus (Winged bean) protein is Trypsin inhibitor 1A.